Reading from the N-terminus, the 387-residue chain is Protein salvador homolog 1 (387 aa).

2 positions are modified to phosphoserine: Ser95 and Ser138. WW domains are found at residues Leu201–Glu234 and Glu236–Ala269. Thr212 is modified (phosphothreonine). The 48-residue stretch at Ile323 to Arg370 folds into the SARAH domain.

As to quaternary structure, homodimer. Stabilized through interaction with STK3/MST2 or STK4/MST1. Interacts (via SARAH domain) with isoform 1 of NEK2. Interacts with ESR1 only in the presence of STK3/MST2. Interacts with WTIP and AJUBA. Phosphorylated by STK3/MST2 and STK4/MST1. Phosphorylation is not required for SAV1 stability and may increase the number of protein binding sites on the scaffold molecule.

Its subcellular location is the nucleus. It localises to the cytoplasm. Its function is as follows. Regulator of STK3/MST2 and STK4/MST1 in the Hippo signaling pathway which plays a pivotal role in organ size control and tumor suppression by restricting proliferation and promoting apoptosis. The core of this pathway is composed of a kinase cascade wherein STK3/MST2 and STK4/MST1, in complex with its regulatory protein SAV1, phosphorylates and activates LATS1/2 in complex with its regulatory protein MOB1, which in turn phosphorylates and inactivates YAP1 oncoprotein and WWTR1/TAZ. Phosphorylation of YAP1 by LATS1/2 inhibits its translocation into the nucleus to regulate cellular genes important for cell proliferation, cell death, and cell migration. SAV1 is required for STK3/MST2 and STK4/MST1 activation and promotes cell-cycle exit and terminal differentiation in developing epithelial tissues. Plays a role in centrosome disjunction by regulating the localization of NEK2 to centrosomes, and its ability to phosphorylate CROCC and CEP250. In conjunction with STK3/MST2, activates the transcriptional activity of ESR1 through the modulation of its phosphorylation. The protein is Protein salvador homolog 1 of Rattus norvegicus (Rat).